The sequence spans 130 residues: Protein ApaG (130 aa).

In terms of domain architecture, ApaG spans 3–127; it reads RALTKDIEVV…FSLDSPGLLR (125 aa).

The chain is Protein ApaG from Rhizobium leguminosarum bv. trifolii (strain WSM2304).